The following is a 274-amino-acid chain: 2-dehydro-3-deoxyphosphooctonate aldolase (274 aa).

Belongs to the KdsA family.

It localises to the cytoplasm. The enzyme catalyses D-arabinose 5-phosphate + phosphoenolpyruvate + H2O = 3-deoxy-alpha-D-manno-2-octulosonate-8-phosphate + phosphate. The protein operates within carbohydrate biosynthesis; 3-deoxy-D-manno-octulosonate biosynthesis; 3-deoxy-D-manno-octulosonate from D-ribulose 5-phosphate: step 2/3. Its pathway is bacterial outer membrane biogenesis; lipopolysaccharide biosynthesis. This Rickettsia felis (strain ATCC VR-1525 / URRWXCal2) (Rickettsia azadi) protein is 2-dehydro-3-deoxyphosphooctonate aldolase.